The sequence spans 476 residues: Ribulose bisphosphate carboxylase large chain (476 aa).

The propeptide occupies Met1–Ser2. Pro3 carries the post-translational modification N-acetylproline. At Lys14 the chain carries N6,N6,N6-trimethyllysine. 2 residues coordinate substrate: Asn123 and Thr173. Catalysis depends on Lys175, which acts as the Proton acceptor. Lys177 provides a ligand contact to substrate. Positions 201, 203, and 204 each coordinate Mg(2+). Lys201 is modified (N6-carboxylysine). His294 serves as the catalytic Proton acceptor. Substrate-binding residues include Arg295, His327, and Ser379.

Belongs to the RuBisCO large chain family. Type I subfamily. Heterohexadecamer of 8 large chains and 8 small chains; disulfide-linked. The disulfide link is formed within the large subunit homodimers. Requires Mg(2+) as cofactor. Post-translationally, the disulfide bond which can form in the large chain dimeric partners within the hexadecamer appears to be associated with oxidative stress and protein turnover.

Its subcellular location is the plastid. The protein resides in the chloroplast. The catalysed reaction is 2 (2R)-3-phosphoglycerate + 2 H(+) = D-ribulose 1,5-bisphosphate + CO2 + H2O. The enzyme catalyses D-ribulose 1,5-bisphosphate + O2 = 2-phosphoglycolate + (2R)-3-phosphoglycerate + 2 H(+). In terms of biological role, ruBisCO catalyzes two reactions: the carboxylation of D-ribulose 1,5-bisphosphate, the primary event in carbon dioxide fixation, as well as the oxidative fragmentation of the pentose substrate in the photorespiration process. Both reactions occur simultaneously and in competition at the same active site. The polypeptide is Ribulose bisphosphate carboxylase large chain (Arenaria drummondii (Drummond sandwort)).